The following is a 477-amino-acid chain: Oxidative stress-induced growth inhibitor 1 (477 aa).

Ser12 carries the post-translational modification Phosphoserine.

It belongs to the OKL38 family. Requires NADPH as cofactor. Ubiquitous. Highest expression in the ovary, testis, kidney, skeletal muscle and liver.

Its subcellular location is the midbody. Functionally, monooxygenase catalytic activity. Involved in regulation of cytokinesis; promotes RHOA activity, probably acting locally at the midbody in late cytokinesis. Monooxygenase activity is involved in stabilizing transient structures between daughter cells, termed intercellular bridges, before abscission. Regulates differentiation and proliferation through the regulation of cell death. The chain is Oxidative stress-induced growth inhibitor 1 from Homo sapiens (Human).